Here is an 809-residue protein sequence, read N- to C-terminus: Leucine--tRNA ligase (809 aa).

Residues 40–50 carry the 'HIGH' region motif; sequence PYPSGRIHMGH. Residues 579-583 carry the 'KMSKS' region motif; that stretch reads KMSKS. ATP is bound at residue Lys-582.

The protein belongs to the class-I aminoacyl-tRNA synthetase family.

The protein resides in the cytoplasm. It catalyses the reaction tRNA(Leu) + L-leucine + ATP = L-leucyl-tRNA(Leu) + AMP + diphosphate. This is Leucine--tRNA ligase from Campylobacter jejuni subsp. jejuni serotype O:23/36 (strain 81-176).